Consider the following 175-residue polypeptide: MMLPMTLCRMSWMLLSCLMFLSWVEGEESQKKLPSSRITCPQGSVAYGSYCYSLILIPQTWSNAELSCQMHFSGHLAFLLSTGEITFVSSLVKNSLTAYQYIWIGLHDPSHGTLPNGSGWKWSSSNVLTFYNWERNPSIAADRGYCAVLSQKSGFQKWRDFNCENELPYICKFKV.

The signal sequence occupies residues 1–26; sequence MMLPMTLCRMSWMLLSCLMFLSWVEG. In terms of domain architecture, C-type lectin spans 38 to 175; that stretch reads ITCPQGSVAY…ELPYICKFKV (138 aa). 3 disulfides stabilise this stretch: Cys40/Cys51, Cys68/Cys171, and Cys146/Cys163.

As to expression, expressed only in CW animals pancreas and to a lesser extent in duodenum. In pancreas it is found in acinar cells, but not in islets.

Its subcellular location is the secreted. Its function is as follows. Constituent of ilotropin, which is a partially purified preparation of cellophane wrapping (CW) pancreata. Capable of initiating duct cell proliferation, a prerequisite for islet neogenesis. The chain is Pancreatic beta cell growth factor (INGAP) from Mesocricetus auratus (Golden hamster).